The following is a 201-amino-acid chain: Basic helix-loop-helix transcription factor scleraxis (201 aa).

2 disordered regions span residues 1–92 (MSFA…NSVN) and 148–177 (AFFH…QPKQ). Gly residues predominate over residues 59-69 (RRAGGGGPGGR). Basic and acidic residues predominate over residues 70-88 (PGREPRQRHTANARERDRT). Positions 75–127 (RQRHTANARERDRTNSVNTAFTALRTLIPTEPADRKLSKIETLRLASSYISHL) constitute a bHLH domain. Over residues 157–167 (SPPPPPPPPPA) the composition is skewed to pro residues.

In terms of assembly, efficient DNA binding requires dimerization with another bHLH protein. Dimerizes and binds the E-box consensus sequence with E12.

The protein localises to the nucleus. In terms of biological role, plays an early essential role in mesoderm formation, as well as a later role in formation of somite-derived chondrogenic lineages. In Homo sapiens (Human), this protein is Basic helix-loop-helix transcription factor scleraxis (SCX).